A 246-amino-acid chain; its full sequence is Deoxycytidylate 5-hydroxymethyltransferase (246 aa).

Cysteine 148 is an active-site residue.

It belongs to the thymidylate synthase family.

It carries out the reaction dCMP + (6R)-5,10-methylene-5,6,7,8-tetrahydrofolate + H2O = 5-hydroxymethyl-dCMP + (6S)-5,6,7,8-tetrahydrofolate. The protein is Deoxycytidylate 5-hydroxymethyltransferase (42) of Escherichia coli (Bacteriophage T2).